The sequence spans 744 residues: MAGRRAMRPSGSSMRGVVARLAAARSPAVSFLVAAAAGAALVGGVYFWLVVSSFRLPDSRAVGCLPDGEGSWAIGMYYGKSPLELRPIELEGRSNGNSSAWPVANPVLTCATPTEGGYPSNFVADPFLYVQGDTLFLFFETKTVSTMQGDIGVARSLDQGATWEFLGIALDEAWHLSYPFVFKYENEIYMMPEGNKKKELRLYRATKFPLEWTLEKVLIDKPLIDSSLVQYDGLWWLFASDFTRHGIEKNAELEIWYSNSPLGPWSEHKQNPIYRSDKSLGARNGGRLFIFEGSLYRPGQDCSGTYGRKVKLYKIEKLTKEEYKEVPVNLGIEEAKKGRNAWNGMRYHHIDAQQLASGGWVAVMDGDRVPSGDSTRRSLFGYMGFLVAVALVTFVGFVKGAISCYIPPSFWVPLTRRSELSRILPVHRFNLKIRRYSTSIGRNISATKARLSEKTWSNTLFFCVIALIGIVNVCIAVHFLLGGNGAEEAYTHQGQHSQFTMVTMTYEARLWNLKLFVEHYSRCESVREIVVVWNKGNHPTSDAFDSTVPVRIRVEEINSLNNRFRGDPLIKTRAVLELDDDIMMTCSDVEKGFKVWREHPERMVGFYPRMIDGDPLQYRNERYARGKKGYNLILTGAAFMDSEFAFSKYWSQEAKEGRDYVHKNFNCEDLLMNFLYANASSSRTVEYVHPAWAIDTSKLSSVAISRDTQKHYDIRTKCLAKFASIYGPLPQKWLFGMREDGWDK.

3 helical membrane passes run 31–51 (FLVAAAAGAALVGGVYFWLVV), 378–398 (SLFGYMGFLVAVALVTFVGFV), and 460–480 (LFFCVIALIGIVNVCIAVHFL). Substrate is bound by residues asparagine 534, 558–563 (NSLNNR), 579–581 (DDD), arginine 609, and 665–669 (FNCED). Position 581 (aspartate 581) interacts with Mn(2+). An intrachain disulfide couples cysteine 667 to cysteine 718. Aspartate 669 is a catalytic residue.

The protein belongs to the glycosyltransferase 64 family. Requires Mn(2+) as cofactor. In terms of tissue distribution, highly expressed in almost all tissues.

The protein resides in the membrane. It functions in the pathway sphingolipid metabolism. Essential protein. Glycosyltransferase that mediates the glycosylation of glycosylinositol phosphorylceramides (GIPCs), the major sphingolipids in the plasma membrane; acts as a HexN(Ac)-specific GIPC sugar transferase. Responsible for the glycosylation of a subgroup of GIPCs found in seeds and pollen that contain GlcNAc and GlcN (GlcN(Ac)). Maybe involved in the maintenance of cell-cell adhesion. This chain is Glucosamine inositolphosphorylceramide transferase 1, found in Oryza sativa subsp. japonica (Rice).